Consider the following 441-residue polypeptide: Protein eva-1 homolog C (441 aa).

The segment at 1–23 (MLLPGRARQPPTPQPVQHPGLRR) is disordered. A signal peptide spans 1 to 48 (MLLPGRARQPPTPQPVQHPGLRRQVEPPGQLLRLFYCTVLVCSKEISA). Residues 49 to 322 (LTDFSGYLTK…AYIRAHPERA (274 aa)) lie on the Extracellular side of the membrane. Asn-62 carries an N-linked (GlcNAc...) asparagine glycan. The 93-residue stretch at 67–159 (ACDGDYLNLQ…KYLLVSFKCQ (93 aa)) folds into the SUEL-type lectin 1 domain. The N-linked (GlcNAc...) asparagine glycan is linked to Asn-165. The SUEL-type lectin 2 domain occupies 168 to 260 (VCEDQELKLH…KYLTVTYACV (93 aa)). A helical transmembrane segment spans residues 323-343 (ALLFVSSVCIGLALTLCALVI). The Cytoplasmic portion of the chain corresponds to 344–441 (RESCAKDFRD…SLPRNMGQFY (98 aa)). The segment at 362-390 (VPGSDKVEEDSEDEEEEEDPSESDFPGEL) is disordered. Over residues 368–383 (VEEDSEDEEEEEDPSE) the composition is skewed to acidic residues.

The protein belongs to the EVA1 family. In terms of tissue distribution, ubiquitous.

The protein resides in the membrane. Functionally, binds heparin. The protein is Protein eva-1 homolog C (EVA1C) of Homo sapiens (Human).